Here is a 308-residue protein sequence, read N- to C-terminus: CMP-N-acetylneuraminate:beta-galactoside alpha-2,3-sialyltransferase (308 aa).

Catalysis depends on D201, which acts as the Proton acceptor. Residues 221 to 225 (LPHPR), 242 to 243 (FE), and 262 to 263 (SS) each bind CMP-N-acetyl-beta-neuraminate. Catalysis depends on H223, which acts as the Proton donor.

Belongs to the glycosyltransferase 52 family. It depends on Divalent metal cations are not required for the alpha-2,3-sialyltransferase activity. as a cofactor.

In terms of biological role, catalyzes the transfer of sialic acid from the substrate CMP-N-acetylneuraminate to lactosyl lipids as preferred acceptor substrates in vitro, forming alpha-2,3-linked sialosides. Beta-1,4-linked galactosyl lipids are better substrates than beta-1,3-linked galactosyl lipids. The natural acceptor substrate may be cell surface oligosaccharides in lipooligosaccharide (LOS), whose sialylation has been demonstrated vital for the virulence of P.multocida. The protein is CMP-N-acetylneuraminate:beta-galactoside alpha-2,3-sialyltransferase (lst) of Pasteurella multocida (strain Pm70).